Here is a 111-residue protein sequence, read N- to C-terminus: DNA-binding protein MTH_1615 (111 aa).

This sequence belongs to the PDCD5 family.

Its function is as follows. DNA-binding protein which can interact with a randomly chosen 20-mer of double-stranded DNA. This is DNA-binding protein MTH_1615 from Methanothermobacter thermautotrophicus (strain ATCC 29096 / DSM 1053 / JCM 10044 / NBRC 100330 / Delta H) (Methanobacterium thermoautotrophicum).